Here is a 927-residue protein sequence, read N- to C-terminus: Autophagy-related protein 18h (927 aa).

Disordered stretches follow at residues 1–25 and 333–353; these read MKSN…NGTN and DGPG…VGSH. The span at 335-344 shows a compositional bias: low complexity; sequence PGPSLSSSPG. WD repeat units follow at residues 379–419 and 441–482; these read AHTS…TKNG and MTSA…NVLE. Disordered stretches follow at residues 750–788 and 844–927; these read NRGF…EERR and IENS…SEEG. Residues 846–859 are compositionally biased toward low complexity; it reads NSSGISGDSNVSSN. A compositionally biased stretch (basic and acidic residues) spans 896–907; it reads ETEHKDAPSDGK.

This sequence belongs to the WD repeat PROPPIN family. As to quaternary structure, component of the PI(3,5)P2 regulatory complex at least composed of ATG18, SAC/FIG4, FAB1 and VAC14. Expressed in roots, flowers and leaves.

It is found in the preautophagosomal structure membrane. Its subcellular location is the vacuole membrane. Functionally, the PI(3,5)P2 regulatory complex regulates both the synthesis and turnover of phosphatidylinositol 3,5-bisphosphate (PtdIns(3,5)P2). Required for autophagy. In Arabidopsis thaliana (Mouse-ear cress), this protein is Autophagy-related protein 18h (ATG18H).